Here is a 284-residue protein sequence, read N- to C-terminus: Polyamine aminopropyltransferase (284 aa).

The 236-residue stretch at 2-237 (ELWYTEQHTE…GHWLFGFASK (236 aa)) folds into the PABS domain. Gln31 contacts S-methyl-5'-thioadenosine. Residues His62 and Asp86 each coordinate spermidine. S-methyl-5'-thioadenosine is bound by residues Glu106 and 137-138 (DG). Asp155 (proton acceptor) is an active-site residue. 155 to 158 (DSTD) serves as a coordination point for spermidine. S-methyl-5'-thioadenosine is bound at residue Pro162.

It belongs to the spermidine/spermine synthase family. As to quaternary structure, homodimer or homotetramer.

It localises to the cytoplasm. The enzyme catalyses S-adenosyl 3-(methylsulfanyl)propylamine + putrescine = S-methyl-5'-thioadenosine + spermidine + H(+). Its pathway is amine and polyamine biosynthesis; spermidine biosynthesis; spermidine from putrescine: step 1/1. Catalyzes the irreversible transfer of a propylamine group from the amino donor S-adenosylmethioninamine (decarboxy-AdoMet) to putrescine (1,4-diaminobutane) to yield spermidine. This chain is Polyamine aminopropyltransferase, found in Clostridium beijerinckii (strain ATCC 51743 / NCIMB 8052) (Clostridium acetobutylicum).